The sequence spans 126 residues: Holo-[acyl-carrier-protein] synthase (126 aa).

Positions 9 and 58 each coordinate Mg(2+).

It belongs to the P-Pant transferase superfamily. AcpS family. It depends on Mg(2+) as a cofactor.

It localises to the cytoplasm. The catalysed reaction is apo-[ACP] + CoA = holo-[ACP] + adenosine 3',5'-bisphosphate + H(+). Functionally, transfers the 4'-phosphopantetheine moiety from coenzyme A to a Ser of acyl-carrier-protein. The sequence is that of Holo-[acyl-carrier-protein] synthase from Serratia proteamaculans (strain 568).